The primary structure comprises 312 residues: Ribosomal protein L11 methyltransferase (312 aa).

The S-adenosyl-L-methionine site is built by T160, G181, D203, and N246.

This sequence belongs to the methyltransferase superfamily. PrmA family.

It localises to the cytoplasm. It carries out the reaction L-lysyl-[protein] + 3 S-adenosyl-L-methionine = N(6),N(6),N(6)-trimethyl-L-lysyl-[protein] + 3 S-adenosyl-L-homocysteine + 3 H(+). Methylates ribosomal protein L11. This is Ribosomal protein L11 methyltransferase from Staphylococcus aureus (strain USA300).